The chain runs to 321 residues: Cytoskeleton protein RodZ (321 aa).

Residues 1 to 111 (MNTEATHDQN…LGKRRKKRDG (111 aa)) lie on the Cytoplasmic side of the membrane. The region spanning 19–71 (LRNAREQLGLSQQAVAERLCLKVSTVRDIEEDKAPSDLASTFLRGYIRSYARL) is the HTH cro/C1-type domain. Positions 30–49 (QQAVAERLCLKVSTVRDIEE) form a DNA-binding region, H-T-H motif. The chain crosses the membrane as a helical; Signal-anchor for type II membrane protein span at residues 112–132 (WLMSFTWLVLFVVVGLTGAWW). At 133–321 (WQNHKAQQEE…TINAEPTSAQ (189 aa)) the chain is on the periplasmic side. Positions 167–190 (DTRAAASQDTTPAETAPAAPVDST) are disordered. A compositionally biased stretch (low complexity) spans 176 to 190 (TTPAETAPAAPVDST).

Belongs to the RodZ family.

It localises to the cell inner membrane. In terms of biological role, cytoskeletal protein that is involved in cell-shape control through regulation of the length of the long axis. This is Cytoskeleton protein RodZ from Salmonella arizonae (strain ATCC BAA-731 / CDC346-86 / RSK2980).